A 186-amino-acid polypeptide reads, in one-letter code: Adenine phosphoribosyltransferase (186 aa).

The protein belongs to the purine/pyrimidine phosphoribosyltransferase family. Homodimer.

It is found in the cytoplasm. It catalyses the reaction AMP + diphosphate = 5-phospho-alpha-D-ribose 1-diphosphate + adenine. It functions in the pathway purine metabolism; AMP biosynthesis via salvage pathway; AMP from adenine: step 1/1. Its function is as follows. Catalyzes a salvage reaction resulting in the formation of AMP, that is energically less costly than de novo synthesis. In Xanthomonas campestris pv. campestris (strain 8004), this protein is Adenine phosphoribosyltransferase.